We begin with the raw amino-acid sequence, 323 residues long: Polycomb complex protein BMI-1-B (323 aa).

The RING-type zinc finger occupies 18 to 57 (CVLCGGYFIDAATIIECLHSFCKTCIVRYLETSKYCPICD). Residues 81–95 (KLVPGLFKGEMKRRR) carry the Nuclear localization signal motif. The tract at residues 238–310 (PHTDRINNTS…HQNPFANRAR (73 aa)) is disordered. Positions 287–301 (HISSTINGTNSSSSH) are enriched in low complexity.

In terms of assembly, component of a PRC1-like complex. Interacts with cbx4.

Its subcellular location is the nucleus. Functionally, component of a Polycomb group (PcG) multiprotein PRC1-like complex, a complex class required to maintain the transcriptionally repressive state of many genes, including Hox genes, throughout development. PcG PRC1 complex acts via chromatin remodeling and modification of histones; it mediates monoubiquitination of histone H2A 'Lys-119', rendering chromatin heritably changed in its expressibility. In the PRC1 complex, it is required to stimulate the E3 ubiquitin-protein ligase activity of rnf2. The protein is Polycomb complex protein BMI-1-B (bmi1b) of Xenopus laevis (African clawed frog).